A 136-amino-acid polypeptide reads, in one-letter code: MNYNPKRTRFRKQHRGRMKGISYRGNTICFGKYALQALEPAWITSRQIEAGRRAMTRNARRGGKIWVRIFPDKPVTVRPAETRMGSGKGSPEYWVAVVKPGRILYEMGGVTENIARRAISIAASKMPIRAQFIISG.

This sequence belongs to the universal ribosomal protein uL16 family. As to quaternary structure, part of the 50S ribosomal subunit.

Its subcellular location is the plastid. It is found in the chloroplast. The polypeptide is Large ribosomal subunit protein uL16c (Guizotia abyssinica (Niger)).